A 1147-amino-acid polypeptide reads, in one-letter code: uncharacterized protein (1147 aa).

7 disordered regions span residues 226 to 245 (FGQG…GQVD), 255 to 297 (IQGT…QEKA), 431 to 617 (SQHP…QSCI), 647 to 670 (EEMD…DPVR), 705 to 945 (HRHR…RRLQ), 1003 to 1032 (RQQQ…EAEK), and 1060 to 1090 (YQRR…RLAQ). A compositionally biased stretch (basic and acidic residues) spans 268–296 (WQKDETQTEDTSKDNHHCIHTSKENHQEK). A compositionally biased stretch (basic residues) spans 431 to 441 (SQHPPKGKAQR). The segment covering 538-549 (PAGGALPAAGQA) has biased composition (low complexity). A compositionally biased stretch (polar residues) spans 584–603 (LNETSPLTQKPENQGAQQSL). A compositionally biased stretch (polar residues) spans 743–752 (NQKTSNNISN). The stretch at 743–804 (NQKTSNNISN…ESKAEKKSQL (62 aa)) forms a coiled coil. The span at 768 to 802 (TDKSKAPKREKEGKLHEEAEAAVGKSKESKAEKKS) shows a compositional bias: basic and acidic residues. Residues 807-819 (KGKKTGAKGKRTR) show a composition bias toward basic residues. Over residues 870–884 (SQVSIDGRSSPTQTA) the composition is skewed to polar residues. The span at 895–945 (DRSHEDPSKAFLVKREQEKASRDRLRAERAEMRRLEVERKRREQEEQRRLQ) shows a compositional bias: basic and acidic residues. Positions 907–1112 (VKREQEKASR…QKDALKKHLH (206 aa)) form a coiled coil.

This is an uncharacterized protein from Bos taurus (Bovine).